The chain runs to 258 residues: Thiamine thiazole synthase (258 aa).

NAD(+) contacts are provided by residues S36, 55 to 56 (ER), G63, V127, and 153 to 155 (HVD). 2 residues coordinate Fe cation: D155 and H170. M224 contacts NAD(+). R234 contacts glycine.

The protein belongs to the THI4 family. As to quaternary structure, homooctamer; tetramer of dimers. It depends on Fe(2+) as a cofactor.

It carries out the reaction hydrogen sulfide + glycine + NAD(+) = ADP-5-ethyl-4-methylthiazole-2-carboxylate + nicotinamide + 3 H2O + H(+). It participates in cofactor biosynthesis; thiamine diphosphate biosynthesis. In terms of biological role, involved in the biosynthesis of the thiazole moiety of thiamine. Catalyzes the conversion of NAD and glycine to adenosine diphosphate 5-(2-hydroxyethyl)-4-methylthiazole-2-carboxylate (ADT), an adenylated thiazole intermediate, using free sulfide as a source of sulfur. This Desulfosudis oleivorans (strain DSM 6200 / JCM 39069 / Hxd3) (Desulfococcus oleovorans) protein is Thiamine thiazole synthase.